A 44-amino-acid chain; its full sequence is NAEEERRDEPDETDVEVEKRFFPNVASVPGQVLKKIFCAISKKC.

Residues 1–18 (NAEEERRDEPDETDVEVE) constitute a propeptide that is removed on maturation. The cysteines at positions 38 and 44 are disulfide-linked.

Expressed by the skin glands.

The protein resides in the secreted. Its function is as follows. Antimicrobial peptide. This chain is Brevinin-1PLa, found in Lithobates palustris (Pickerel frog).